A 219-amino-acid polypeptide reads, in one-letter code: MYEQLFSPTVQHTLDLVGIFVFAISGALLAVRKNFDVFGIAVLAEVTALGGGLFRDLVIGAVPPAAFTDLGYFLTPLLATLLVFFLHPHVERLQTGVNIFDAAGLGLFCVAGTTKAYDYGLGLTASACLGLTTAVGGGVLRDVLANEVPSLLRWDRDLYAVPAIVGSAMVALCIRYEALTPFTSGLAVVTAFVLRLLALRFHWRAPRAWNRRSTVVEGD.

A run of 6 helical transmembrane segments spans residues 10-30, 34-54, 66-86, 93-113, 120-140, and 158-178; these read VQHT…ALLA, NFDV…GGLF, AFTD…VFFL, LQTG…VAGT, GLGL…GGVL, and LYAV…RYEA.

This sequence belongs to the UPF0126 family.

The protein localises to the cell membrane. This Streptomyces coelicolor (strain ATCC BAA-471 / A3(2) / M145) protein is UPF0126 membrane protein SCO5481.